The following is a 251-amino-acid chain: BRI3-binding protein (251 aa).

Helical transmembrane passes span 13-33 (AGLL…PGAQ), 125-145 (ALLL…TLGF), 146-166 (TFSV…VVLF), and 185-205 (VLPL…GFYW). Residues 217-247 (NPSVEEKLEHLEKQVRLLNIRLNRVLESLDR) adopt a coiled-coil conformation. Lys-229 is modified (N6-acetyllysine). Phosphoserine is present on Ser-248.

As to quaternary structure, interacts with LETMD1. Interacts with BRI3 (isoforms 1 and 2); the interaction with isoform 2 is weaker than with isoform 1. Interacts with BRI3; the interaction is weak. Interacts with TMEM238L. Most abundantly expressed in brain, liver and kidney. Overexpressed in leukemia and lymphoma cell lines, as well as in various carcinomas.

It localises to the mitochondrion outer membrane. In terms of biological role, involved in tumorigenesis and may function by stabilizing p53/TP53. This chain is BRI3-binding protein, found in Homo sapiens (Human).